Consider the following 122-residue polypeptide: Ribonuclease P protein component (122 aa).

It belongs to the RnpA family. Consists of a catalytic RNA component (M1 or rnpB) and a protein subunit.

It carries out the reaction Endonucleolytic cleavage of RNA, removing 5'-extranucleotides from tRNA precursor.. Functionally, RNaseP catalyzes the removal of the 5'-leader sequence from pre-tRNA to produce the mature 5'-terminus. It can also cleave other RNA substrates such as 4.5S RNA. The protein component plays an auxiliary but essential role in vivo by binding to the 5'-leader sequence and broadening the substrate specificity of the ribozyme. This Oenococcus oeni (strain ATCC BAA-331 / PSU-1) protein is Ribonuclease P protein component.